The primary structure comprises 949 residues: MAM domain-containing glycosylphosphatidylinositol anchor protein 2 (949 aa).

Residues 1-25 (MDLVYGLVWLLTVLLEGISGQGVYA) form the signal peptide. 2 consecutive Ig-like domains span residues 27-127 (PTVR…IRVD) and 134-232 (PVVT…KMVS). 2 disulfides stabilise this stretch: cysteine 62–cysteine 110 and cysteine 159–cysteine 216. Asparagine 92, asparagine 213, and asparagine 237 each carry an N-linked (GlcNAc...) asparagine glycan. 4 Ig-like domains span residues 242–328 (PSIK…NIIV), 340–436 (PDPY…VNIS), 442–533 (PNLT…ALVQ), and 540–627 (PAVE…FLVT). 2 disulfide bridges follow: cysteine 264–cysteine 310 and cysteine 359–cysteine 417. N-linked (GlcNAc...) asparagine glycosylation is found at asparagine 434, asparagine 443, asparagine 504, asparagine 610, and asparagine 703. 2 disulfides stabilise this stretch: cysteine 465/cysteine 515 and cysteine 561/cysteine 611. A Fibronectin type-III domain is found at 638-738 (DTYNPVWQNR…TIRVIKYTGE (101 aa)). The MAM domain maps to 739–914 (FHCGFEDGNI…VSIAEGECAK (176 aa)). Residue aspartate 924 is the site of GPI-anchor amidated aspartate attachment. A propeptide spans 925–949 (GAVGILVHIWLFPVIILISILSPRR) (removed in mature form).

In terms of assembly, interacts (through the Ig-like domains) with NLGN2. In terms of tissue distribution, expressed predominantly in neuronal tissue. Expressed in brain.

It is found in the cell membrane. May be involved in cell-cell interactions. This is MAM domain-containing glycosylphosphatidylinositol anchor protein 2 (Mdga2) from Rattus norvegicus (Rat).